A 146-amino-acid chain; its full sequence is Hemoglobin subunit beta (146 aa).

The region spanning 2–146 (EWTDFERATI…VVNSLGRQYH (145 aa)) is the Globin domain. Heme b-binding residues include H63 and H92.

This sequence belongs to the globin family. As to quaternary structure, heterotetramer of two alpha chains and two beta chains. Can form polymers. As to expression, red blood cells.

Its function is as follows. Involved in oxygen transport from gills to the various peripheral tissues. This is Hemoglobin subunit beta (hbb) from Chelidonichthys kumu (Bluefin gurnard).